The sequence spans 467 residues: H(+)/Cl(-) exchange transporter ClcA (467 aa).

Residues 1–30 (MTKRERIIQSVLVKVPKDAINQFLSHGSTP) lie on the Cytoplasmic side of the membrane. The chain crosses the membrane as a helical span at residues 31 to 67 (ISVLFLAALVGVLAGLVGTYFEIAVHFVSETRTEWLK). The Periplasmic segment spans residues 68–74 (SEIGHLL). Residues 75–98 (PLWLAAILISAALAFVGYFLVHRF) form a helical membrane-spanning segment. The short motif at 104–108 (GSGIP) is the Selectivity filter part_1 element. Ser-105 contacts chloride. Positions 107–114 (IPEIEGAM) form an intramembrane region, helical. The Cytoplasmic segment spans residues 115–121 (DNIRPVR). A run of 2 helical transmembrane segments spans residues 122–139 (WWRV…ALGS) and 146–164 (EGPT…TDIF). The Selectivity filter part_2 signature appears at 144–148 (GREGP). The Cytoplasmic portion of the chain corresponds to 165 to 174 (RVKDDDTRHS). Intramembrane regions (helical) lie at residues 175 to 187 (LLAS…LAAA) and 191 to 199 (PLAGIMFVV). At 200–212 (EEMRPQFRYSLIS) the chain is on the cytoplasmic side. A helical transmembrane segment spans residues 213-230 (IRAVIISAVMANIVFRAI). Over 231 to 250 (NGQDAVITMPQYQPPELKAL) the chain is Periplasmic. A helical membrane pass occupies residues 251–279 (WLFLLLGGLFGVFGVLFNKLVTVAQDAFV). At 280-285 (ALHKND) the chain is on the cytoplasmic side. Residues 286 to 307 (RKRYLITGTCLGGIFGLLLLYV) traverse the membrane as a helical segment. Residues 308–327 (PELTGGGIHLIPDVTNGNYS) are Periplasmic-facing. 2 helical membrane-spanning segments follow: residues 328–347 (VSLL…ICFG) and 353–374 (GIFA…ATAK). The Selectivity filter part_3 signature appears at 353 to 357 (GIFAP). Ile-354 and Phe-355 together coordinate chloride. The Periplasmic portion of the chain corresponds to 375 to 384 (ILLPDLPIEP). Positions 385–399 (GMFAIAGMGALFAAT) form an intramembrane region, helical. Positions 400–402 (VRA) form an intramembrane region, note=Loop between two helices. Positions 403–414 (PITGILLVIEMT) form an intramembrane region, helical. Residues 415 to 419 (NNYYL) constitute an intramembrane region (note=Loop between two helices). The chain crosses the membrane as a helical span at residues 420 to 436 (ILPLIITSLGAVICAQI). Over 437 to 467 (CGGKPIYSQLLHRTIKNDKLRQQDLPEQQNS) the chain is Cytoplasmic. Residue Tyr-443 coordinates chloride.

The protein belongs to the chloride channel (TC 2.A.49) family. ClcA subfamily. Homodimer.

It localises to the cell inner membrane. It carries out the reaction 2 chloride(in) + H(+)(out) = 2 chloride(out) + H(+)(in). Functionally, proton-coupled chloride transporter. Functions as antiport system and exchanges two chloride ions for 1 proton. Probably acts as an electrical shunt for an outwardly-directed proton pump that is linked to amino acid decarboxylation, as part of the extreme acid resistance (XAR) response. This Vibrio vulnificus (strain CMCP6) protein is H(+)/Cl(-) exchange transporter ClcA.